We begin with the raw amino-acid sequence, 270 residues long: Bis(5'-nucleosyl)-tetraphosphatase, symmetrical (270 aa).

This sequence belongs to the Ap4A hydrolase family.

The enzyme catalyses P(1),P(4)-bis(5'-adenosyl) tetraphosphate + H2O = 2 ADP + 2 H(+). Its function is as follows. Hydrolyzes diadenosine 5',5'''-P1,P4-tetraphosphate to yield ADP. This chain is Bis(5'-nucleosyl)-tetraphosphatase, symmetrical, found in Haemophilus ducreyi (strain 35000HP / ATCC 700724).